The chain runs to 204 residues: Somatotropin (204 aa).

Residues 1–17 form the signal peptide; that stretch reads MDRVVLLLSVLSLGVSS. Position 18 is a pyrrolidone carboxylic acid (glutamine 18). Disulfide bonds link cysteine 69-cysteine 177 and cysteine 194-cysteine 202.

Belongs to the somatotropin/prolactin family.

The protein resides in the secreted. In terms of biological role, growth hormone plays an important role in growth control and is involved in the regulation of several anabolic processes. Implicated as an osmoregulatory substance important for seawater adaptation. This chain is Somatotropin (gh), found in Seriola quinqueradiata (Five-ray yellowtail).